Reading from the N-terminus, the 231-residue chain is Staphylococcal superantigen-like 7 (231 aa).

Residues Met1–Ala30 form the signal peptide.

This sequence belongs to the staphylococcal/streptococcal toxin family. As to quaternary structure, interacts with host IgA and complement C5; these interactions inhibits complement activation.

It is found in the secreted. Its function is as follows. Plays a role in the inhibition of host complement-mediated lysis and serum bactericidal activity by interacting with complement component C5. Affects all three pathways of complement activation and inhibits the cleavage of C5 by preventing its binding to C5 convertases. In turn, prevents C5a-mediated neutrophil migration. The polypeptide is Staphylococcal superantigen-like 7 (Staphylococcus aureus (strain NCTC 8325 / PS 47)).